The following is a 1941-amino-acid chain: Integrin beta-like protein B (1941 aa).

A signal peptide spans 1 to 20 (MKNIIKYLFIFLCFLIITEA). Residues 21-1871 (THFRYGTISW…VTTQNSSNKT (1851 aa)) lie on the Extracellular side of the membrane. Residues 420 to 457 (YGDKCTVLPPCKNGVPNGGVNGDGKCLCNNGWTGSDCS) enclose the EGF-like domain. 2 disulfides stabilise this stretch: cysteine 430–cysteine 445 and cysteine 447–cysteine 456. The 184-residue stretch at 513–696 (DVYLLVDANM…AGIKAVSSKL (184 aa)) folds into the VWFA domain. N-linked (GlcNAc...) asparagine glycosylation is found at asparagine 1400, asparagine 1505, asparagine 1530, asparagine 1606, asparagine 1652, asparagine 1738, asparagine 1777, asparagine 1848, asparagine 1866, and asparagine 1869. The chain crosses the membrane as a helical span at residues 1872 to 1892 (VLSGAIAGAAAGTALIAAAMW). The Cytoplasmic portion of the chain corresponds to 1893–1941 (KMLRKAAPPTDAFFDEGAFLGDGVNSNPMYQESKNGGENPLYLASNETL). The interval 1921–1941 (MYQESKNGGENPLYLASNETL) is disordered.

It belongs to the SIB family. Interacts with talA/talin.

It localises to the membrane. Its function is as follows. Implicated in cellular adhesion. This is Integrin beta-like protein B (sibB) from Dictyostelium discoideum (Social amoeba).